A 109-amino-acid polypeptide reads, in one-letter code: Translation initiation factor IF-1, chloroplastic (109 aa).

The S1-like domain maps to 18–93 (KSLNQEKENL…TRGRIIYRLK (76 aa)).

It belongs to the IF-1 family. Component of the 30S ribosomal translation pre-initiation complex which assembles on the 30S ribosome in the order IF-2 and IF-3, IF-1 and N-formylmethionyl-tRNA(fMet); mRNA recruitment can occur at any time during PIC assembly.

Its subcellular location is the plastid. The protein resides in the chloroplast. Its function is as follows. One of the essential components for the initiation of protein synthesis. Stabilizes the binding of IF-2 and IF-3 on the 30S subunit to which N-formylmethionyl-tRNA(fMet) subsequently binds. Helps modulate mRNA selection, yielding the 30S pre-initiation complex (PIC). Upon addition of the 50S ribosomal subunit IF-1, IF-2 and IF-3 are released leaving the mature 70S translation initiation complex. The protein is Translation initiation factor IF-1, chloroplastic of Tupiella akineta (Green alga).